A 750-amino-acid chain; its full sequence is Photosystem I P700 chlorophyll a apoprotein A1 (750 aa).

The next 8 helical transmembrane spans lie at 70 to 93 (VFSAHFGQLSIIFLWLSGMYFHGA), 156 to 179 (LYCTAIGALVFAALMLFAGWFHYH), 195 to 219 (LNHHLAGLLGLGSLSWAGHQVHVSL), 291 to 309 (IAHHHLAIAILFLIAGHMY), 346 to 369 (WHAQLSLNLAMLGSLTIVVAHHMY), 385 to 411 (LSLFTHHMWIGGFLIVGAAAHAAIFMV), 433 to 455 (AIISHLNWACIFLGFHSFGLYIH), and 531 to 549 (FLVHHIHAFTIHVTVLILL). Cys573 and Cys582 together coordinate [4Fe-4S] cluster. The next 2 membrane-spanning stretches (helical) occupy residues 589-610 (HVFLGLFWMYNSISVVIFHFSW) and 664-686 (LSAYGLFFLGAHFVWAFSLMFLF). His675 contributes to the chlorophyll a' binding site. 2 residues coordinate chlorophyll a: Met683 and Tyr691. A phylloquinone-binding site is contributed by Trp692. A helical transmembrane segment spans residues 724–744 (AVGVTHYLLGGIATTWAFFLA).

Belongs to the PsaA/PsaB family. As to quaternary structure, the PsaA/B heterodimer binds the P700 chlorophyll special pair and subsequent electron acceptors. PSI consists of a core antenna complex that captures photons, and an electron transfer chain that converts photonic excitation into a charge separation. The eukaryotic PSI reaction center is composed of at least 11 subunits. The cofactor is P700 is a chlorophyll a/chlorophyll a' dimer, A0 is one or more chlorophyll a, A1 is one or both phylloquinones and FX is a shared 4Fe-4S iron-sulfur center..

Its subcellular location is the plastid. The protein resides in the chloroplast thylakoid membrane. It catalyses the reaction reduced [plastocyanin] + hnu + oxidized [2Fe-2S]-[ferredoxin] = oxidized [plastocyanin] + reduced [2Fe-2S]-[ferredoxin]. Its function is as follows. PsaA and PsaB bind P700, the primary electron donor of photosystem I (PSI), as well as the electron acceptors A0, A1 and FX. PSI is a plastocyanin-ferredoxin oxidoreductase, converting photonic excitation into a charge separation, which transfers an electron from the donor P700 chlorophyll pair to the spectroscopically characterized acceptors A0, A1, FX, FA and FB in turn. Oxidized P700 is reduced on the lumenal side of the thylakoid membrane by plastocyanin. The sequence is that of Photosystem I P700 chlorophyll a apoprotein A1 from Jasminum nudiflorum (Winter jasmine).